We begin with the raw amino-acid sequence, 503 residues long: Probable cytosol aminopeptidase (503 aa).

Mn(2+) is bound by residues lysine 270 and aspartate 275. Lysine 282 is an active-site residue. Residues aspartate 293, aspartate 352, and glutamate 354 each coordinate Mn(2+). The active site involves arginine 356.

This sequence belongs to the peptidase M17 family. The cofactor is Mn(2+).

The protein localises to the cytoplasm. It carries out the reaction Release of an N-terminal amino acid, Xaa-|-Yaa-, in which Xaa is preferably Leu, but may be other amino acids including Pro although not Arg or Lys, and Yaa may be Pro. Amino acid amides and methyl esters are also readily hydrolyzed, but rates on arylamides are exceedingly low.. It catalyses the reaction Release of an N-terminal amino acid, preferentially leucine, but not glutamic or aspartic acids.. Its function is as follows. Presumably involved in the processing and regular turnover of intracellular proteins. Catalyzes the removal of unsubstituted N-terminal amino acids from various peptides. The chain is Probable cytosol aminopeptidase from Shigella boydii serotype 18 (strain CDC 3083-94 / BS512).